The chain runs to 248 residues: Secreted and transmembrane protein 1 (248 aa).

The signal sequence occupies residues 1–28; it reads MQTCPLAFPGHVSQALGTLLFLAASLSA. Over 29–145 the chain is Extracellular; it reads QNEGWDSPIC…AEPQSAPDTG (117 aa). A disulfide bridge links Cys-38 with Cys-55. Asn-56 carries N-linked (GlcNAc...) asparagine glycosylation. Residues 146-166 form a helical membrane-spanning segment; it reads FWPVPAVVTAVFILLVALVMF. Residues 167 to 248 are Cytoplasmic-facing; that stretch reads AWYRCRCSQQ…QPLFPYAADP (82 aa).

The protein belongs to the SECTM family. In terms of assembly, interacts with CD7. Detected at the highest levels in peripheral blood leukocytes and breast cancer cell lines. Found in leukocytes of the myeloid lineage, with the strongest expression observed in granulocytes and no detectable expression in lymphocytes. Expressed in thymic epithelial cells and fibroblasts.

It localises to the cell membrane. The protein resides in the secreted. In terms of biological role, may be involved in thymocyte signaling. This is Secreted and transmembrane protein 1 (SECTM1) from Homo sapiens (Human).